A 177-amino-acid chain; its full sequence is Endoribonuclease YbeY (177 aa).

The Zn(2+) site is built by histidine 118, histidine 122, and histidine 128.

This sequence belongs to the endoribonuclease YbeY family. Zn(2+) serves as cofactor.

The protein resides in the cytoplasm. Single strand-specific metallo-endoribonuclease involved in late-stage 70S ribosome quality control and in maturation of the 3' terminus of the 16S rRNA. The protein is Endoribonuclease YbeY of Mycolicibacterium paratuberculosis (strain ATCC BAA-968 / K-10) (Mycobacterium paratuberculosis).